We begin with the raw amino-acid sequence, 591 residues long: Probable lysosomal cobalamin transporter (591 aa).

The next 5 membrane-spanning stretches (helical) occupy residues 8 to 28 (LIWVAYAVAVAILFLIASTFV), 39 to 59 (AAVTIVCIFTTLALLATVLLI), 95 to 115 (IVYYTLYSLDAVLCLLVIPFT), 144 to 164 (WTLGFLIFVVAIFLVGFFVPF), and 198 to 218 (FLITVGTVLFVLYTGAGMALL). A disordered region spans residues 238–266 (TASQLETNRERQRQLEGRNEGREGGLDSR). The segment covering 244–266 (TNRERQRQLEGRNEGREGGLDSR) has biased composition (basic and acidic residues). 4 helical membrane passes run 315 to 335 (LIGGLILLVFALVIFASMLIT), 378 to 398 (VLFLLLVLFLFSASVVGIATA), 422 to 442 (MATVLLTLITLAINYSVAMVV), and 509 to 529 (FFGIVLFWAQFAFLGVYLIVF).

It belongs to the LIMR family. LMBRD1 subfamily.

It localises to the lysosome membrane. Probable lysosomal cobalamin transporter. Required to export cobalamin from lysosomes allowing its conversion to cofactors. The chain is Probable lysosomal cobalamin transporter from Pyrenophora tritici-repentis (strain Pt-1C-BFP) (Wheat tan spot fungus).